Reading from the N-terminus, the 312-residue chain is Olfactory receptor 10D3 (312 aa).

The Extracellular portion of the chain corresponds to 1–26 (MEIKNCSVVTEFILLGIPHTEGFETL). N-linked (GlcNAc...) asparagine glycosylation is present at Asn5. Residues 27–47 (LFVLFLPFYACTLVGNVSILV) form a helical membrane-spanning segment. At 48–57 (AVISSTRLHT) the chain is on the cytoplasmic side. The helical transmembrane segment at 58-78 (PMYFFLGNLSVFDMGFSSVTC) threads the bilayer. At 79–97 (PKMLFYLMGLSRLISYQDC) the chain is on the extracellular side. Cys97 and Cys179 are joined by a disulfide. A helical transmembrane segment spans residues 98-118 (VSQLFFFHFLGSIECFLYTVM). Topologically, residues 119-139 (AYDRFAAICHPLRYSVIMNSK) are cytoplasmic. Residues 140–160 (ICVALAVGTWLLGCFHSSVLT) form a helical membrane-spanning segment. Over 161–197 (SLTFTLPYCGPNEVDHFFCDIPAILPLASADTSLAQR) the chain is Extracellular. A helical transmembrane segment spans residues 198-218 (VSFTNVGLVSLVCFLLILLSY). The Cytoplasmic portion of the chain corresponds to 219–239 (TRITISILSIQSTEGRQRAFS). Residues 240 to 260 (TCSAHLIAILCAYGPIITIYL) traverse the membrane as a helical segment. Residues 261–266 (QPTPNP) lie on the Extracellular side of the membrane. The helical transmembrane segment at 267-287 (MLGTVVQILMNLVGPMLNPLI) threads the bilayer. Residues 288–312 (YTLRNKEVKIALKKILHGKGSVSEG) are Cytoplasmic-facing.

The protein belongs to the G-protein coupled receptor 1 family.

The protein resides in the cell membrane. Functionally, potential odorant receptor. The sequence is that of Olfactory receptor 10D3 from Mus musculus (Mouse).